Here is a 197-residue protein sequence, read N- to C-terminus: MIIGITGGIASGKSTVVKVIRKAGYQVIDADQVVHDLQEKGGRLYEALREAFGNQILKADGELDRTKLSEMLFSNPDNMATSSAIQNQIIKEELAAKRDHLAQSQAIFFMDIPLLMELGYQDWFDAIWLVYVDAQTQLQRLMARNRLDKGKARQRIASQLPIEEKKPYASLVIDNSGDIAALIKQVQSALLLLANPR.

In terms of domain architecture, DPCK spans 2–197 (IIGITGGIAS…SALLLLANPR (196 aa)). ATP is bound at residue 10–15 (ASGKST).

This sequence belongs to the CoaE family.

The protein resides in the cytoplasm. It carries out the reaction 3'-dephospho-CoA + ATP = ADP + CoA + H(+). It participates in cofactor biosynthesis; coenzyme A biosynthesis; CoA from (R)-pantothenate: step 5/5. Catalyzes the phosphorylation of the 3'-hydroxyl group of dephosphocoenzyme A to form coenzyme A. The protein is Dephospho-CoA kinase of Streptococcus pyogenes serotype M1.